Reading from the N-terminus, the 370-residue chain is Putative glutamate--cysteine ligase 2 (370 aa).

The protein belongs to the glutamate--cysteine ligase type 2 family. YbdK subfamily.

The catalysed reaction is L-cysteine + L-glutamate + ATP = gamma-L-glutamyl-L-cysteine + ADP + phosphate + H(+). ATP-dependent carboxylate-amine ligase which exhibits weak glutamate--cysteine ligase activity. This chain is Putative glutamate--cysteine ligase 2, found in Janthinobacterium sp. (strain Marseille) (Minibacterium massiliensis).